The primary structure comprises 645 residues: 1-deoxy-D-xylulose-5-phosphate synthase 1 (645 aa).

The disordered stretch occupies residues 1–20 (MTDTKTPTLDRVAGPADLRS). Residues histidine 78 and 119–121 (AHS) contribute to the thiamine diphosphate site. Position 150 (aspartate 150) interacts with Mg(2+). Thiamine diphosphate is bound by residues 151-152 (GS), asparagine 179, tyrosine 291, and glutamate 373. Asparagine 179 contacts Mg(2+).

Belongs to the transketolase family. DXPS subfamily. As to quaternary structure, homodimer. Mg(2+) is required as a cofactor. Thiamine diphosphate serves as cofactor.

It carries out the reaction D-glyceraldehyde 3-phosphate + pyruvate + H(+) = 1-deoxy-D-xylulose 5-phosphate + CO2. Its pathway is metabolic intermediate biosynthesis; 1-deoxy-D-xylulose 5-phosphate biosynthesis; 1-deoxy-D-xylulose 5-phosphate from D-glyceraldehyde 3-phosphate and pyruvate: step 1/1. In terms of biological role, catalyzes the acyloin condensation reaction between C atoms 2 and 3 of pyruvate and glyceraldehyde 3-phosphate to yield 1-deoxy-D-xylulose-5-phosphate (DXP). In Roseobacter denitrificans (strain ATCC 33942 / OCh 114) (Erythrobacter sp. (strain OCh 114)), this protein is 1-deoxy-D-xylulose-5-phosphate synthase 1.